The following is a 144-amino-acid chain: 3-hydroxyacyl-[acyl-carrier-protein] dehydratase FabZ (144 aa).

Histidine 48 is a catalytic residue.

It belongs to the thioester dehydratase family. FabZ subfamily.

It is found in the cytoplasm. It catalyses the reaction a (3R)-hydroxyacyl-[ACP] = a (2E)-enoyl-[ACP] + H2O. Functionally, involved in unsaturated fatty acids biosynthesis. Catalyzes the dehydration of short chain beta-hydroxyacyl-ACPs and long chain saturated and unsaturated beta-hydroxyacyl-ACPs. This chain is 3-hydroxyacyl-[acyl-carrier-protein] dehydratase FabZ, found in Bacillus licheniformis (strain ATCC 14580 / DSM 13 / JCM 2505 / CCUG 7422 / NBRC 12200 / NCIMB 9375 / NCTC 10341 / NRRL NRS-1264 / Gibson 46).